The following is a 234-amino-acid chain: Adenosine 5'-phosphosulfate reductase (234 aa).

[4Fe-4S] cluster contacts are provided by C120, C121, C203, and C206. The active-site Nucleophile; cysteine thiosulfonate intermediate is C229.

Belongs to the PAPS reductase family. CysH subfamily. [4Fe-4S] cluster is required as a cofactor.

It localises to the cytoplasm. The enzyme catalyses [thioredoxin]-disulfide + sulfite + AMP + 2 H(+) = adenosine 5'-phosphosulfate + [thioredoxin]-dithiol. It participates in sulfur metabolism; hydrogen sulfide biosynthesis; sulfite from sulfate. In terms of biological role, catalyzes the formation of sulfite from adenosine 5'-phosphosulfate (APS) using thioredoxin as an electron donor. The chain is Adenosine 5'-phosphosulfate reductase from Bacillus cereus (strain 03BB102).